The primary structure comprises 1849 residues: Protein virilizer (1849 aa).

Basic and acidic residues-rich tracts occupy residues 206-219 (QHYHQHVDEEQREM), 242-265 (THSESNEREYIRCSRDKGSRDWSR), 281-291 (RSRSDADEHKW), 332-347 (HSSESLHRDRDDEERS), and 785-818 (VEAKPEGKEDKPMDDSVEQKPDEGKAAGIRAAEE). Disordered stretches follow at residues 206 to 364 (QHYH…DEII), 783 to 818 (RVVEAKPEGKEDKPMDDSVEQKPDEGKAAGIRAAEE), 1557 to 1584 (SASMETPAVETENDGANPAASCSTSSSG), 1666 to 1686 (GESKRTLNLSGSPQSNREMTP), 1715 to 1782 (RGRG…NRGS), and 1798 to 1849 (IGSP…PYLR). A compositionally biased stretch (polar residues) spans 1671–1684 (TLNLSGSPQSNREM). Low complexity predominate over residues 1732–1742 (SRPPNTSRPPS). Residues 1800–1818 (SPSSWTESGGGSYRSTSES) show a composition bias toward polar residues.

It belongs to the vir family. In terms of assembly, component of the WMM complex, a N6-methyltransferase complex composed of a catalytic subcomplex, named MAC, and of an associated subcomplex, named MACOM. The MAC subcomplex is composed of Ime4/Mettl3 and Mettl14. The MACOM subcomplex is composed of fl(2)d, Flacc/Xio, Hakai, vir, and, in some cases of nito. Part of a complex containing fl(2)d, Sxl and vir.

The protein resides in the nucleus. Functionally, associated component of the WMM complex, a complex that mediates N6-methyladenosine (m6A) methylation of mRNAs, a modification that plays a role in the efficiency of mRNA splicing and is required for sex determination. Required for sex determination and dosage compensation via Sxl alternative splicing: m6A methylation acts as a key regulator of Sxl pre-mRNA and promotes female-specific alternative splicing of Sxl, which determines female physiognomy. M6A methylation is also required for neuronal functions. Required for proper inclusion of regulated exons in Ubx transcripts, leading to isoforms Ia/b and IIa/b. This chain is Protein virilizer (vir), found in Drosophila pseudoobscura pseudoobscura (Fruit fly).